Reading from the N-terminus, the 421-residue chain is Proton/sodium-glutamate symport protein (421 aa).

Over Met-1 to Lys-3 the chain is Cytoplasmic. The chain crosses the membrane as a helical span at residues Ile-4–Phe-24. The Extracellular portion of the chain corresponds to Tyr-25 to Arg-43. A helical transmembrane segment spans residues Leu-44–Val-64. Over Gly-65–Thr-77 the chain is Cytoplasmic. A helical membrane pass occupies residues Ile-78–Ile-98. The Extracellular portion of the chain corresponds to Phe-99–Lys-148. The helical transmembrane segment at Gly-149–Gly-169 threads the bilayer. At Glu-170–Pro-198 the chain is on the cytoplasmic side. Residues Phe-199–Pro-219 traverse the membrane as a helical segment. The Extracellular portion of the chain corresponds to Leu-220–Lys-222. The helical transmembrane segment at Leu-223–Ala-243 threads the bilayer. A topological domain (cytoplasmic) is located at residue Lys-244. Residues Leu-245–Tyr-265 form a helical membrane-spanning segment. Topologically, residues Ser-266–Ser-306 are extracellular. A helical membrane pass occupies residues Thr-307–Ile-327. Residues Ser-328–Gln-330 are Cytoplasmic-facing. 2 consecutive transmembrane segments (helical) span residues Ile-331–Ser-351 and Phe-352–Ile-372. The Cytoplasmic portion of the chain corresponds to Ala-373–Ala-421.

The protein belongs to the dicarboxylate/amino acid:cation symporter (DAACS) (TC 2.A.23) family. In terms of assembly, homotrimer.

It is found in the cell membrane. This carrier protein is part of the Na(+)-dependent, binding-protein-independent glutamate-aspartate transport system. The sequence is that of Proton/sodium-glutamate symport protein (gltT) from Geobacillus stearothermophilus (Bacillus stearothermophilus).